The following is a 94-amino-acid chain: Co-chaperonin GroES (94 aa).

This sequence belongs to the GroES chaperonin family. Heptamer of 7 subunits arranged in a ring. Interacts with the chaperonin GroEL.

It is found in the cytoplasm. In terms of biological role, together with the chaperonin GroEL, plays an essential role in assisting protein folding. The GroEL-GroES system forms a nano-cage that allows encapsulation of the non-native substrate proteins and provides a physical environment optimized to promote and accelerate protein folding. GroES binds to the apical surface of the GroEL ring, thereby capping the opening of the GroEL channel. This is Co-chaperonin GroES from Streptococcus agalactiae.